We begin with the raw amino-acid sequence, 638 residues long: Sodium- and chloride-dependent glycine transporter 1 (638 aa).

The interval 1–30 is disordered; the sequence is MAVAHGPVATSSPEQNGAVPSEATKKDQNL. Over 1–40 the chain is Cytoplasmic; sequence MAVAHGPVATSSPEQNGAVPSEATKKDQNLTRGNWGNQIE. Helical transmembrane passes span 41–61, 68–88, and 120–140; these read FVLT…FPYL, GAFM…LFFM, and VSTY…YYFF. Residues 141–217 are Extracellular-facing; sequence SSMTHVLPWA…LSDDIGDFGE (77 aa). 4 N-linked (GlcNAc...) asparagine glycosylation sites follow: Asn169, Asn172, Asn182, and Asn188. 9 consecutive transmembrane segments (helical) span residues 218–238, 247–267, 292–312, 339–359, 382–402, 438–458, 462–482, 502–522, and 542–562; these read VRLP…LCLI, VVYF…VRGV, VWGD…GGLI, SVYA…HLGV, LLPI…LLGL, VAGF…WLLL, YAAS…IMYI, LFFQ…ILIF, and VAIG…YALF. Residues 563-638 are Cytoplasmic-facing; sequence QLCRTDGDTL…GSSRLQDSRI (76 aa). A Phosphothreonine modification is found at Thr603. Residues Ser605 and Ser630 each carry the phosphoserine modification. The essential for interaction with EXOC1 stretch occupies residues 627-638; that stretch reads SNGSSRLQDSRI.

The protein belongs to the sodium:neurotransmitter symporter (SNF) (TC 2.A.22) family. SLC6A9 subfamily. As to quaternary structure, interacts with EXOC1; interaction increases the transporter capacity of SLC6A9 probably by promoting its insertion into the cell membrane. Interacts with EXOC3 and EXOC4. Found only in the white matter of the CNS. In terms of tissue distribution, found in the gray matter of CNS as well as in macrophages and mast cells in peripheral tissues.

Its subcellular location is the cell membrane. It carries out the reaction glycine(out) + chloride(out) + 2 Na(+)(out) = glycine(in) + chloride(in) + 2 Na(+)(in). Its activity is regulated as follows. Inhibited by sarcosine. Sodium- and chloride-dependent glycine transporter. Essential for regulating glycine concentrations at inhibitory glycinergic synapses. This chain is Sodium- and chloride-dependent glycine transporter 1 (Slc6a9), found in Rattus norvegicus (Rat).